Reading from the N-terminus, the 236-residue chain is UPF0257 lipoprotein YnfC (236 aa).

The signal sequence occupies residues 1–16 (MKYKLLPCLLAILLTG). C17 is lipidated: N-palmitoyl cysteine. Residue C17 is the site of S-diacylglycerol cysteine attachment.

It belongs to the UPF0257 family.

The protein localises to the cell membrane. This Escherichia coli O157:H7 protein is UPF0257 lipoprotein YnfC.